An 84-amino-acid polypeptide reads, in one-letter code: uncharacterized protein (84 aa).

Residues 25 to 45 (ILMTVAGFIIAFAILVFQISF) form a helical membrane-spanning segment.

The protein resides in the membrane. This is an uncharacterized protein from Bacillus anthracis.